The primary structure comprises 343 residues: Selenide, water dikinase (343 aa).

Sec-13 is a catalytic residue. A non-standard amino acid (selenocysteine) is located at residue Sec-13. ATP-binding positions include Lys-16 and Thr-44–Asp-46. Asp-47 provides a ligand contact to Mg(2+). Residues Asp-64, Asp-87, and Gly-135–Thr-137 each bind ATP. Asp-87 provides a ligand contact to Mg(2+). Asp-223 is a Mg(2+) binding site.

Belongs to the selenophosphate synthase 1 family. Class I subfamily. Homodimer. Requires Mg(2+) as cofactor.

It catalyses the reaction hydrogenselenide + ATP + H2O = selenophosphate + AMP + phosphate + 2 H(+). Its function is as follows. Synthesizes selenophosphate from selenide and ATP. In Geobacter metallireducens (strain ATCC 53774 / DSM 7210 / GS-15), this protein is Selenide, water dikinase.